The sequence spans 355 residues: Uroporphyrinogen decarboxylase (355 aa).

Substrate contacts are provided by residues 27–31 (RQAGR), D77, Y154, T209, and H328.

Belongs to the uroporphyrinogen decarboxylase family. Homodimer.

It localises to the cytoplasm. The enzyme catalyses uroporphyrinogen III + 4 H(+) = coproporphyrinogen III + 4 CO2. Its pathway is porphyrin-containing compound metabolism; protoporphyrin-IX biosynthesis; coproporphyrinogen-III from 5-aminolevulinate: step 4/4. Catalyzes the decarboxylation of four acetate groups of uroporphyrinogen-III to yield coproporphyrinogen-III. This Photobacterium profundum (strain SS9) protein is Uroporphyrinogen decarboxylase.